The following is a 429-amino-acid chain: Enolase (429 aa).

Q163 is a binding site for (2R)-2-phosphoglycerate. E205 (proton donor) is an active-site residue. Residues D242, E285, and D312 each contribute to the Mg(2+) site. K337, R366, S367, and K388 together coordinate (2R)-2-phosphoglycerate. K337 serves as the catalytic Proton acceptor.

This sequence belongs to the enolase family. Mg(2+) is required as a cofactor.

The protein localises to the cytoplasm. Its subcellular location is the secreted. The protein resides in the cell surface. It carries out the reaction (2R)-2-phosphoglycerate = phosphoenolpyruvate + H2O. Its pathway is carbohydrate degradation; glycolysis; pyruvate from D-glyceraldehyde 3-phosphate: step 4/5. Catalyzes the reversible conversion of 2-phosphoglycerate (2-PG) into phosphoenolpyruvate (PEP). It is essential for the degradation of carbohydrates via glycolysis. The sequence is that of Enolase from Oceanobacillus iheyensis (strain DSM 14371 / CIP 107618 / JCM 11309 / KCTC 3954 / HTE831).